A 358-amino-acid chain; its full sequence is MFDRLEAVEQRYEKLNELLMDPDVINDPKKLRDYSKEQADLEETVQTYREYKSVREQLAEAKAMLEEKLEPELREMVKEEIGELEEREEALVEKLKVLLLPKDPNDEKNVIMEIRAAAGGEEAALFAGDLYRMYTRYAESQGWKTEVIEASPTGLGGYKEIIFMINGKGAYSKLKFENGAHRVQRVPETESGGRIHTSTATVACLPEMEEIEVEINEKDIRVDTFASSGPGGQSVNTTMSAVRLTHIPTGIVVTCQDEKSQIKNKEKAMKVLRARIYDKYQQEARAEYDQTRKQAVGTGDRSERIRTYNFPQNRVTDHRIGLTIQKLDQVLDGHLDEIIEALILDDQAKKLEQANDAS.

The residue at position 233 (glutamine 233) is an N5-methylglutamine.

This sequence belongs to the prokaryotic/mitochondrial release factor family. Post-translationally, methylated by PrmC. Methylation increases the termination efficiency of RF1.

The protein resides in the cytoplasm. Peptide chain release factor 1 directs the termination of translation in response to the peptide chain termination codons UAG and UAA. This chain is Peptide chain release factor 1, found in Geobacillus kaustophilus (strain HTA426).